A 508-amino-acid polypeptide reads, in one-letter code: Cytochrome P450 monooxygenase orf4 (508 aa).

Cys447 contacts heme.

This sequence belongs to the cytochrome P450 family. The cofactor is heme.

It participates in mycotoxin biosynthesis. Cytochrome P450 monooxygenase; part of the gene cluster that mediates the biosynthesis of brefeldin A (BFA), a protein transport inhibitor that shows antiviral, antifungal, and antitumor properties. The proposed biosynthesis of BFA involves formation of an acyclic polyketide chain that is differentially tailored throughout the backbone. The highly reducing polyketide synthase Bref-PKS is proposed to synthesize the precisely reduced octaketide precursor, which could then be directly offloaded by the thiohydrolase enzyme Bref-TH followed by a cytochrome P450 monooxygenase-mediated formation of the cyclopentane ring and macrocyclization to afford 7-deoxy BFA. Alternatively, the first ring annulation can also occur on the ACP-tethered intermediate before the thiohydrolase release and lactonization. The C7-hydroxylation by another cytochrome P450 monooxygenase is believed to be the final step in the process to obtain the final structure of BFA. In addition to the HRPKS Bref-PKS and the thiohydrolase Bref-TH, the brefeldin A biosynthesis cluster contains 4 cytochrome p450 monooxygenases (called orf3 to orf6), as well a the probable cluster-specific transcription regulator orf8. The protein is Cytochrome P450 monooxygenase orf4 of Eupenicillium brefeldianum (Penicillium brefeldianum).